The primary structure comprises 869 residues: H(+)/Cl(-) exchange transporter 6 (869 aa).

Residues 1–80 (MAGCRGSLCC…KKGRRYEAVK (80 aa)) lie on the Cytoplasmic side of the membrane. The next 2 helical transmembrane spans lie at 81–113 (WMVVFAIGVCTGLVGLFVDFFVRLFTQLKFGVV) and 128–150 (LSLLELLGFNLTFVFLASLLVLI). Residues 156–160 (GSGIP) carry the Selectivity filter part_1 motif. Ser157 is a binding site for chloride. An intramembrane region (helical) is located at residues 159-166 (IPEVKCYL). Helical transmembrane passes span 176 to 194 (RLRTLLCKVLGVLFSVAGG) and 200 to 217 (EGPMIHSGSVVGAGLPQF). The Selectivity filter part_2 signature appears at 198–202 (EKEGP). 2 consecutive intramembrane regions (helical) follow at residues 241-253 (FVSAGAAAGVAAA) and 257-265 (PIGGTLFSL). 3 helical membrane passes run 277 to 294 (TWKVLFCSMSATFTLNFF), 335 to 364 (GFFVVMGVIGGLLGATFNCLNKRLAKYRMR), and 371 to 392 (KLVRVLESLLVSLVTTVVVFVA). N-linked (GlcNAc...) asparagine glycans are attached at residues Asn410, Asn422, and Asn432. Helical transmembrane passes span 462–481 (PVTLALFFVLYFLLACWTYG) and 487–511 (GLFVPSLLCGAAFGRLVANVLKSYI). The Selectivity filter part_3 signature appears at 487-491 (GLFVP). Phe489 contributes to the chloride binding site. The helical intramembrane region spans 519-533 (GTFALIGAAAFLGGV). Positions 534–536 (VRM) form an intramembrane region, note=Loop between two helices. Positions 537–548 (TISLTVILIEST) form an intramembrane region, helical. An intramembrane region (note=Loop between two helices) is located at residues 549-552 (NEIT). Residues 553–571 (YGLPIMVTLMVAKWTGDFF) traverse the membrane as a helical segment. Topologically, residues 572 to 869 (NKGIYDIHVG…ARLRQHYQTI (298 aa)) are cytoplasmic. Tyr576 provides a ligand contact to chloride. One can recognise a CBS 1 domain in the interval 605 to 662 (MEPNLTYVYPHTRIQSLVSILRTTVHHAFPVVTENRGNEKEFMKGNQLISNNIKFKKS). Residue 630–632 (HHA) participates in ATP binding. Phosphoserine is present on Ser773. The region spanning 807 to 868 (MNPSPFTVSP…QARLRQHYQT (62 aa)) is the CBS 2 domain. 849–852 (TRHN) contributes to the ATP binding site.

This sequence belongs to the chloride channel (TC 2.A.49) family. ClC-6/CLCN6 subfamily. N-glycosylated on several asparagine residues. As to expression, testis, ovary, small intestine, brain and skeletal muscle. Low level expression in aortic and coronary vascular smooth muscle cells, and aortic endothelial cells. Isoform 3 is only detected in kidney.

Its subcellular location is the late endosome membrane. The catalysed reaction is 2 chloride(in) + H(+)(out) = 2 chloride(out) + H(+)(in). In terms of biological role, voltage-gated channel mediating the exchange of chloride ions against protons. Functions as antiporter and contributes to the acidification of the late endosome lumen. The CLC channel family contains both chloride channels and proton-coupled anion transporters that exchange chloride or another anion for protons. The presence of conserved gating glutamate residues is typical for family members that function as antiporters. The chain is H(+)/Cl(-) exchange transporter 6 from Homo sapiens (Human).